Consider the following 344-residue polypeptide: RNA 3'-terminal phosphate cyclase (344 aa).

ATP contacts are provided by residues Q103 and 283 to 287; that span reads HLADQ. H308 serves as the catalytic Tele-AMP-histidine intermediate.

It belongs to the RNA 3'-terminal cyclase family. Type 1 subfamily.

The protein resides in the cytoplasm. The catalysed reaction is a 3'-end 3'-phospho-ribonucleotide-RNA + ATP = a 3'-end 2',3'-cyclophospho-ribonucleotide-RNA + AMP + diphosphate. Its function is as follows. Catalyzes the conversion of 3'-phosphate to a 2',3'-cyclic phosphodiester at the end of RNA. The mechanism of action of the enzyme occurs in 3 steps: (A) adenylation of the enzyme by ATP; (B) transfer of adenylate to an RNA-N3'P to produce RNA-N3'PP5'A; (C) and attack of the adjacent 2'-hydroxyl on the 3'-phosphorus in the diester linkage to produce the cyclic end product. The biological role of this enzyme is unknown but it is likely to function in some aspects of cellular RNA processing. The protein is RNA 3'-terminal phosphate cyclase of Salmonella agona (strain SL483).